A 1788-amino-acid polypeptide reads, in one-letter code: MDAHYAPAGFAEPPAPPASAATQPAAPAWAYEARVPAAASSPSCSGSSPSLKASYEDGHPSQSESDVLQRQTFTASHQLPGYATTPQATGMHSSAATELFVAGPLPTTGTLPPPTLSAYQHSSTFSNRNFATTSPLVLQDSSFNTTSNGILSPHDPLLQIKTSQGTVPTALAFERLGSSALSNSVPPQSSTYRSAQESAPHLLQPQFSLLPSTLGGAQQTPQAYNSALFPSSAASIERALLRECSVIKHHQRPSVTQSIQAQLTGSQHPLHSYLSSASIGNFQEPSRQSSLSCSSVRDSTQVSNGVLPQKTPQVSAELAQSYSSVIPSSGYLPSATKVDSCSTKQPLTSTTIPKPQSVIPPVQTLNYSKPLHNQSSVISGQAQIYSTAQLPSLLSVSQSQNYGLVQPHNVPSIVHSQVYRSSRVEKLPSLYKTLTFSGSSQPVTSENQTLSYSSNQQEVLSLVTNENYPAQTRDLPSVSESQNYSSGQSQGLSPVSQTQVSYSSQSQVLSVVSPSESYASGQSLTLTAPSLSYSSASRGQSLPVSTPTPSYTSMHPSPNAQTQGSSAQPQEFLPAVQSSFASSTRGQTLQSSIPSPDPKSYAERKLDSSVYTSSKQDEFPVQKLQALQSQASLESSSQRLPDGEVNAQESVYKTSKADDRYSQSVTRNNSHLEDQVVGVALQGSEQEENMVGSMTQLNQQSGQSNNAVATDLKKATNLMQTPQVRLNTKDLNQQHSLMHKMHEAKVQQQHDQIMSASSQIQIPNPALGQSHQALPHTSVLLDSACDLQILQQAGILQASLGQAKASLQVQRVQSPQQIVHPFLQMDGHIIQSNGEHPQQQLHPHNSDIMKLDLPEPSKPLQQLTTKGPFSEANPHDSKNQFVSLGSICFSEAMLLSDERNILSNVDDILAATAAACGVTPSDFSKSAANETMQDIESSDSKSHYQQSLNVRHVNSDFNSIAASVGKPQSINDISLNGNQVSVSLSSVPTLQSETVLDQPHMETPSQTIPTKVPSAMVGLGQEIQEQSSDPFKKQLTINHESKEDREIAVDSALSNNRNQEFVSNSRSISGDSVVSERDFTLVGDDTGVLVNPRRSTLALLAMPQPGDAASGKTEDEKQDVTYFNLPKEKAKGKEQGKEEEDNQKQLKRSAQCKRQNPRGTDVYVPYTSPSLESCDEGFQHQEKMRQKIKEVEEKQPEVKTGFIASFLDFLKCGPKQQFSTLAVRVPNRTRRSGIQTTRTFCPPPFAKTSPAAQAPSETGGVSLSEKVDSELKTLEQLSSFSSDEEDPGSCGHDIYKNTSAPLTVLDATSDKTKKTVLEALPVATPGASAETAGVAPTASTAVATIKQDLHLTSLTVNTMENANSTESPTAIELDSLPSDQLAKGQDTVAIEGFTDEENIESGGEGQYRERDEFVVKIEDIETFKEALNTGKEPPAIWKVQKALLQKFVPEIRDGQREFAATNSYLGYFGDAKTKYKRIYVKFIENANKKEYVRVCSKKPRNKPSQTIRNIPSKPSSISKTSDPPVSKTTTTKTPSTKPKAKQLKIKAEPPPKKRKKWKEEFSSSQSESSPEVRSSSSEDEGFEPPAPSVTRFLNTRAMKETFKSYMELLVSIALDPDTMQALEKSNDELLLPHMKKIDGMLNDNRKRLLVNLHLDQPFKNALESFPELTVITRDSKAKSGGSAISKIKMNGKAYNKKTLRTSKTTTKSAQEFAVDPEKIQLYSLYHSLHHYKYHVYLICKNEISSVQKKNEDLGQEEIVQLCMKNVKWVEDLFEKFGELLNHVQQKCS.

The segment covering 1–53 (MDAHYAPAGFAEPPAPPASAATQPAAPAWAYEARVPAAASSPSCSGSSPSLKA) has biased composition (low complexity). Disordered stretches follow at residues 1–69 (MDAH…DVLQ), 472–498 (TRDLPSVSESQNYSSGQSQGLSPVSQT), and 532–617 (SYSS…SKQD). 4 stretches are compositionally biased toward polar residues: residues 60-69 (PSQSESDVLQ), 478-492 (VSESQNYSSGQSQGL), 532-569 (SYSSASRGQSLPVSTPTPSYTSMHPSPNAQTQGSSAQP), and 576-594 (VQSSFASSTRGQTLQSSIP). 2 positions are modified to phosphoserine: Ser670 and Ser940. Position 1003 is a phosphothreonine (Thr1003). Ser1041 is subject to Phosphoserine. 2 disordered regions span residues 1104–1163 (QPGD…TDVY) and 1234–1264 (IQTTRTFCPPPFAKTSPAAQAPSETGGVSLS). Residue Lys1112 forms a Glycyl lysine isopeptide (Lys-Gly) (interchain with G-Cter in SUMO2) linkage. Over residues 1126 to 1136 (PKEKAKGKEQG) the composition is skewed to basic and acidic residues. Residue Lys1137 forms a Glycyl lysine isopeptide (Lys-Gly) (interchain with G-Cter in SUMO2) linkage. A phosphoserine mark is found at Ser1262, Ser1281, and Ser1282. Thr1394 is subject to Phosphothreonine. Position 1401 is a phosphoserine (Ser1401). Residues 1494-1588 (VCSKKPRNKP…DEGFEPPAPS (95 aa)) are disordered. Residues 1510–1537 (IPSKPSSISKTSDPPVSKTTTTKTPSTK) show a composition bias toward low complexity. A compositionally biased stretch (basic and acidic residues) spans 1545–1561 (IKAEPPPKKRKKWKEEF). The segment covering 1562 to 1575 (SSSQSESSPEVRSS) has biased composition (low complexity).

In terms of assembly, interacts with TET1.

It localises to the chromosome. Its function is as follows. Plays an essential role in the protection and maintenance of transcriptional and developmental programs. Protects many bivalent promoters and poised enhancers from hypermethylation, showing a marked preference for these regulatory elements over other types of promoters or enhancers. Mechanistically, cooperates with TET1 and binds to DNA in a common complex to inhibit the binding of DNMT3A/3B and therefore de novo methylation. This Mus musculus (Mouse) protein is Glutamine and serine-rich protein 1.